The following is a 311-amino-acid chain: Aspartate carbamoyltransferase catalytic subunit (311 aa).

Carbamoyl phosphate-binding residues include arginine 55 and threonine 56. Lysine 85 serves as a coordination point for L-aspartate. Carbamoyl phosphate contacts are provided by arginine 106, histidine 134, and glutamine 137. L-aspartate is bound by residues arginine 167 and arginine 228. Positions 266 and 267 each coordinate carbamoyl phosphate.

Belongs to the aspartate/ornithine carbamoyltransferase superfamily. ATCase family. Heterododecamer (2C3:3R2) of six catalytic PyrB chains organized as two trimers (C3), and six regulatory PyrI chains organized as three dimers (R2).

It carries out the reaction carbamoyl phosphate + L-aspartate = N-carbamoyl-L-aspartate + phosphate + H(+). Its pathway is pyrimidine metabolism; UMP biosynthesis via de novo pathway; (S)-dihydroorotate from bicarbonate: step 2/3. Catalyzes the condensation of carbamoyl phosphate and aspartate to form carbamoyl aspartate and inorganic phosphate, the committed step in the de novo pyrimidine nucleotide biosynthesis pathway. The chain is Aspartate carbamoyltransferase catalytic subunit from Psychromonas ingrahamii (strain DSM 17664 / CCUG 51855 / 37).